Consider the following 129-residue polypeptide: DNA-directed RNA polymerase subunit omega (129 aa).

A disordered region spans residues 77 to 98 (VDEPESEVVPALSSAPQNPEAI).

It belongs to the RNA polymerase subunit omega family. The RNAP catalytic core consists of 2 alpha, 1 beta, 1 beta' and 1 omega subunit. When a sigma factor is associated with the core the holoenzyme is formed, which can initiate transcription.

The catalysed reaction is RNA(n) + a ribonucleoside 5'-triphosphate = RNA(n+1) + diphosphate. In terms of biological role, promotes RNA polymerase assembly. Latches the N- and C-terminal regions of the beta' subunit thereby facilitating its interaction with the beta and alpha subunits. In Methylocella silvestris (strain DSM 15510 / CIP 108128 / LMG 27833 / NCIMB 13906 / BL2), this protein is DNA-directed RNA polymerase subunit omega.